The primary structure comprises 156 residues: Small ribosomal subunit protein uS7 (156 aa).

Belongs to the universal ribosomal protein uS7 family. Part of the 30S ribosomal subunit. Contacts proteins S9 and S11.

Functionally, one of the primary rRNA binding proteins, it binds directly to 16S rRNA where it nucleates assembly of the head domain of the 30S subunit. Is located at the subunit interface close to the decoding center, probably blocks exit of the E-site tRNA. The protein is Small ribosomal subunit protein uS7 of Rhodobacter capsulatus (Rhodopseudomonas capsulata).